A 760-amino-acid polypeptide reads, in one-letter code: Transferrin receptor protein 1 (760 aa).

At 1-65 (MMDQARSAFS…VTKPKRCGGS (65 aa)) the chain is on the cytoplasmic side. The segment at 1-67 (MMDQARSAFS…KPKRCGGSIC (67 aa)) is mediates interaction with SH3BP4. Ser-10 and Ser-19 each carry phosphoserine. Tyr-20 is subject to Phosphotyrosine. An Endocytosis signal motif is present at residues 20 to 23 (YTRF). Position 21 is a phosphothreonine (Thr-21). Ser-24 is modified (phosphoserine). The Stop-transfer sequence motif lies at 58–61 (KPKR). 2 S-palmitoyl cysteine lipidation sites follow: Cys-62 and Cys-67. A helical; Signal-anchor for type II membrane protein membrane pass occupies residues 66–86 (ICYGTIAVIIFFLIGFMIGYL). Residues 87–760 (GYCKGVEPKT…GDVWDIDNEF (674 aa)) lie on the Extracellular side of the membrane. The 91-residue stretch at 223–313 (SKAATVTGKL…GTGDPYTPGF (91 aa)) folds into the PA domain. Residues Asn-251 and Asn-317 are each glycosylated (N-linked (GlcNAc...) asparagine). The segment at 569–760 (TMDTYKELTE…GDVWDIDNEF (192 aa)) is ligand-binding. A Cell attachment site motif is present at residues 646–648 (RGD). N-linked (GlcNAc...) asparagine glycans are attached at residues Asn-722 and Asn-727.

Belongs to the peptidase M28 family. M28B subfamily. In terms of assembly, homodimer; disulfide-linked. Binds one transferrin or HFE molecule per subunit. Interacts with SH3BP4. Interacts with STEAP3; facilitates TFRC endocytosis in erythroid precursor cells. Post-translationally, stearoylated by ZDHHC6 which inhibits TFRC-mediated activation of the JNK pathway and promotes mitochondrial fragmentation. Stearoylation does not affect iron uptake.

The protein localises to the cell membrane. It localises to the melanosome. Functionally, cellular uptake of iron occurs via receptor-mediated endocytosis of ligand-occupied transferrin receptor into specialized endosomes. Endosomal acidification leads to iron release. The apotransferrin-receptor complex is then recycled to the cell surface with a return to neutral pH and the concomitant loss of affinity of apotransferrin for its receptor. Transferrin receptor is necessary for development of erythrocytes and the nervous system. Positively regulates T and B cell proliferation through iron uptake. Acts as a lipid sensor that regulates mitochondrial fusion by regulating activation of the JNK pathway. When dietary levels of stearate (C18:0) are low, promotes activation of the JNK pathway, resulting in HUWE1-mediated ubiquitination and subsequent degradation of the mitofusin MFN2 and inhibition of mitochondrial fusion. When dietary levels of stearate (C18:0) are high, TFRC stearoylation inhibits activation of the JNK pathway and thus degradation of the mitofusin MFN2. Mediates uptake of NICOL1 into fibroblasts where it may regulate extracellular matrix production. This is Transferrin receptor protein 1 (TFRC) from Pongo abelii (Sumatran orangutan).